We begin with the raw amino-acid sequence, 84 residues long: Cell division topological specificity factor (84 aa).

Belongs to the MinE family.

Its function is as follows. Prevents the cell division inhibition by proteins MinC and MinD at internal division sites while permitting inhibition at polar sites. This ensures cell division at the proper site by restricting the formation of a division septum at the midpoint of the long axis of the cell. This chain is Cell division topological specificity factor, found in Pseudomonas fluorescens (strain Pf0-1).